The primary structure comprises 440 residues: Thymidine phosphorylase (440 aa).

It belongs to the thymidine/pyrimidine-nucleoside phosphorylase family. As to quaternary structure, homodimer.

It catalyses the reaction thymidine + phosphate = 2-deoxy-alpha-D-ribose 1-phosphate + thymine. Its pathway is pyrimidine metabolism; dTMP biosynthesis via salvage pathway; dTMP from thymine: step 1/2. The enzymes which catalyze the reversible phosphorolysis of pyrimidine nucleosides are involved in the degradation of these compounds and in their utilization as carbon and energy sources, or in the rescue of pyrimidine bases for nucleotide synthesis. The polypeptide is Thymidine phosphorylase (Klebsiella pneumoniae subsp. pneumoniae (strain ATCC 700721 / MGH 78578)).